Here is a 192-residue protein sequence, read N- to C-terminus: CASP-like protein 1E1 (192 aa).

The disordered stretch occupies residues 1–22; the sequence is MDSQNKNSVDAMDGIESRGMKE. The Cytoplasmic segment spans residues 1–29; it reads MDSQNKNSVDAMDGIESRGMKERGGRTNS. The chain crosses the membrane as a helical span at residues 30–50; that stretch reads FLVLRVLAFVLTSTAAIVHGV. Topologically, residues 51–81 are extracellular; the sequence is NNQTETVPIQLTSSMPPLYVPVVAKWHYLSA. N52 carries N-linked (GlcNAc...) asparagine glycosylation. Residues 82-102 form a helical membrane-spanning segment; the sequence is FVFFVVSNAIACSYAAISVML. Residues 103–118 lie on the Cytoplasmic side of the membrane; the sequence is SFCGKKSMVPIILTLD. The helical transmembrane segment at 119–139 threads the bilayer; the sequence is LLMVALLFSSNGAATAIGVMG. The Extracellular segment spans residues 140–161; sequence YKGNSHVKWNKVCNVFGKFCNQ. A helical transmembrane segment spans residues 162–182; sequence VAASVVLSLIGSIVFVLLVML. At 183–192 the chain is on the cytoplasmic side; the sequence is TAFRLHNKSK.

This sequence belongs to the Casparian strip membrane proteins (CASP) family. Homodimer and heterodimers.

It is found in the cell membrane. This chain is CASP-like protein 1E1, found in Ricinus communis (Castor bean).